The sequence spans 173 residues: Crossover junction endodeoxyribonuclease RuvC (173 aa).

Residues D8, E67, and D139 contribute to the active site. Positions 8, 67, and 139 each coordinate Mg(2+).

It belongs to the RuvC family. Homodimer which binds Holliday junction (HJ) DNA. The HJ becomes 2-fold symmetrical on binding to RuvC with unstacked arms; it has a different conformation from HJ DNA in complex with RuvA. In the full resolvosome a probable DNA-RuvA(4)-RuvB(12)-RuvC(2) complex forms which resolves the HJ. Requires Mg(2+) as cofactor.

Its subcellular location is the cytoplasm. The enzyme catalyses Endonucleolytic cleavage at a junction such as a reciprocal single-stranded crossover between two homologous DNA duplexes (Holliday junction).. The RuvA-RuvB-RuvC complex processes Holliday junction (HJ) DNA during genetic recombination and DNA repair. Endonuclease that resolves HJ intermediates. Cleaves cruciform DNA by making single-stranded nicks across the HJ at symmetrical positions within the homologous arms, yielding a 5'-phosphate and a 3'-hydroxyl group; requires a central core of homology in the junction. The consensus cleavage sequence is 5'-(A/T)TT(C/G)-3'. Cleavage occurs on the 3'-side of the TT dinucleotide at the point of strand exchange. HJ branch migration catalyzed by RuvA-RuvB allows RuvC to scan DNA until it finds its consensus sequence, where it cleaves and resolves the cruciform DNA. This is Crossover junction endodeoxyribonuclease RuvC from Photorhabdus laumondii subsp. laumondii (strain DSM 15139 / CIP 105565 / TT01) (Photorhabdus luminescens subsp. laumondii).